Consider the following 976-residue polypeptide: Leucine--tRNA ligase (976 aa).

Positions Met1–Val23 are enriched in low complexity. The tract at residues Met1–Arg34 is disordered. Residues Pro86–His97 carry the 'HIGH' region motif. Positions Lys745–Ser749 match the 'KMSKS' region motif. Residue Lys748 coordinates ATP.

This sequence belongs to the class-I aminoacyl-tRNA synthetase family.

It localises to the cytoplasm. The catalysed reaction is tRNA(Leu) + L-leucine + ATP = L-leucyl-tRNA(Leu) + AMP + diphosphate. The sequence is that of Leucine--tRNA ligase from Mycobacterium marinum (strain ATCC BAA-535 / M).